A 207-amino-acid chain; its full sequence is Holliday junction branch migration complex subunit RuvA (207 aa).

The segment at Met-1 to Leu-63 is domain I. The domain II stretch occupies residues Asp-64–Thr-142. The tract at residues Ser-143–Val-153 is flexible linker. Residues Val-153–Arg-207 form a domain III region.

Belongs to the RuvA family. In terms of assembly, homotetramer. Forms an RuvA(8)-RuvB(12)-Holliday junction (HJ) complex. HJ DNA is sandwiched between 2 RuvA tetramers; dsDNA enters through RuvA and exits via RuvB. An RuvB hexamer assembles on each DNA strand where it exits the tetramer. Each RuvB hexamer is contacted by two RuvA subunits (via domain III) on 2 adjacent RuvB subunits; this complex drives branch migration. In the full resolvosome a probable DNA-RuvA(4)-RuvB(12)-RuvC(2) complex forms which resolves the HJ.

The protein localises to the cytoplasm. The RuvA-RuvB-RuvC complex processes Holliday junction (HJ) DNA during genetic recombination and DNA repair, while the RuvA-RuvB complex plays an important role in the rescue of blocked DNA replication forks via replication fork reversal (RFR). RuvA specifically binds to HJ cruciform DNA, conferring on it an open structure. The RuvB hexamer acts as an ATP-dependent pump, pulling dsDNA into and through the RuvAB complex. HJ branch migration allows RuvC to scan DNA until it finds its consensus sequence, where it cleaves and resolves the cruciform DNA. The protein is Holliday junction branch migration complex subunit RuvA of Bifidobacterium animalis subsp. lactis (strain AD011).